The chain runs to 30 residues: uncharacterized protein (30 aa).

The segment at 1-30 is disordered; sequence MHLSTLPNVPWPNRSFTTKRPPLPNMSFSW.

This is an uncharacterized protein from Saccharomyces cerevisiae (strain ATCC 204508 / S288c) (Baker's yeast).